The primary structure comprises 160 residues: uncharacterized protein (160 aa).

This is an uncharacterized protein from Galliformes (FAdV-1).